A 78-amino-acid polypeptide reads, in one-letter code: UPF0335 protein A1E_00570 (78 aa).

It belongs to the UPF0335 family.

This Rickettsia canadensis (strain McKiel) protein is UPF0335 protein A1E_00570.